The primary structure comprises 270 residues: uncharacterized protein (270 aa).

The region spanning 34–266 (LIARGLTKSY…PDVRRLYLGD (233 aa)) is the ABC transporter domain. 66–73 (GPNGAGKT) is a binding site for ATP.

This sequence belongs to the ABC transporter superfamily.

This is an uncharacterized protein from Rhizobium meliloti (strain 1021) (Ensifer meliloti).